The following is a 208-amino-acid chain: Uracil phosphoribosyltransferase (208 aa).

5-phospho-alpha-D-ribose 1-diphosphate is bound by residues Arg-78, Arg-103, and 130-138 (DPMLATGGS). Residues Ile-193 and 198 to 200 (GDA) each bind uracil. 5-phospho-alpha-D-ribose 1-diphosphate is bound at residue Asp-199.

This sequence belongs to the UPRTase family. Mg(2+) is required as a cofactor.

The enzyme catalyses UMP + diphosphate = 5-phospho-alpha-D-ribose 1-diphosphate + uracil. Its pathway is pyrimidine metabolism; UMP biosynthesis via salvage pathway; UMP from uracil: step 1/1. Its activity is regulated as follows. Allosterically activated by GTP. Its function is as follows. Catalyzes the conversion of uracil and 5-phospho-alpha-D-ribose 1-diphosphate (PRPP) to UMP and diphosphate. The sequence is that of Uracil phosphoribosyltransferase from Yersinia enterocolitica serotype O:8 / biotype 1B (strain NCTC 13174 / 8081).